Here is a 357-residue protein sequence, read N- to C-terminus: Homoserine kinase (357 aa).

Belongs to the GHMP kinase family. Homoserine kinase subfamily. As to quaternary structure, homodimer.

It carries out the reaction L-homoserine + ATP = O-phospho-L-homoserine + ADP + H(+). Its pathway is amino-acid biosynthesis; L-threonine biosynthesis; L-threonine from L-aspartate: step 4/5. Functionally, commits homoserine to the threonine biosynthesis pathway by catalyzing its O-phosphorylation. This Candida albicans (strain SC5314 / ATCC MYA-2876) (Yeast) protein is Homoserine kinase (THR1).